The chain runs to 194 residues: Inosine triphosphate pyrophosphatase (194 aa).

N-acetylalanine is present on alanine 2. Position 14-19 (threonine 14–lysine 19) interacts with ITP. Residue glutamate 44 coordinates Mg(2+). Residues lysine 56, aspartate 72 to threonine 73, lysine 89, phenylalanine 149 to aspartate 152, lysine 172, and histidine 177 to arginine 178 contribute to the ITP site.

The protein belongs to the HAM1 NTPase family. Homodimer. The cofactor is Mg(2+). Ubiquitous. Highly expressed in heart, liver, sex glands, thyroid and adrenal gland.

Its subcellular location is the cytoplasm. The catalysed reaction is ITP + H2O = IMP + diphosphate + H(+). It catalyses the reaction dITP + H2O = dIMP + diphosphate + H(+). The enzyme catalyses XTP + H2O = XMP + diphosphate + H(+). It carries out the reaction N(6)-hydroxy-dATP + H2O = N(6)-hydroxy-dAMP + diphosphate + H(+). In terms of biological role, pyrophosphatase that hydrolyzes the non-canonical purine nucleotides inosine triphosphate (ITP), deoxyinosine triphosphate (dITP) as well as 2'-deoxy-N-6-hydroxylaminopurine triphosphate (dHAPTP) and xanthosine 5'-triphosphate (XTP) to their respective monophosphate derivatives. The enzyme does not distinguish between the deoxy- and ribose forms. Probably excludes non-canonical purines from RNA and DNA precursor pools, thus preventing their incorporation into RNA and DNA and avoiding chromosomal lesions. The protein is Inosine triphosphate pyrophosphatase of Homo sapiens (Human).